A 513-amino-acid polypeptide reads, in one-letter code: ATP synthase subunit alpha (513 aa).

An ATP-binding site is contributed by 169 to 176; it reads GDRQTGKT.

It belongs to the ATPase alpha/beta chains family. As to quaternary structure, F-type ATPases have 2 components, CF(1) - the catalytic core - and CF(0) - the membrane proton channel. CF(1) has five subunits: alpha(3), beta(3), gamma(1), delta(1), epsilon(1). CF(0) has three main subunits: a(1), b(2) and c(9-12). The alpha and beta chains form an alternating ring which encloses part of the gamma chain. CF(1) is attached to CF(0) by a central stalk formed by the gamma and epsilon chains, while a peripheral stalk is formed by the delta and b chains.

Its subcellular location is the cell inner membrane. The catalysed reaction is ATP + H2O + 4 H(+)(in) = ADP + phosphate + 5 H(+)(out). Produces ATP from ADP in the presence of a proton gradient across the membrane. The alpha chain is a regulatory subunit. This Pectobacterium carotovorum subsp. carotovorum (strain PC1) protein is ATP synthase subunit alpha.